Here is a 159-residue protein sequence, read N- to C-terminus: tRNA-specific adenosine deaminase (159 aa).

Positions 6–133 constitute a CMP/dCMP-type deaminase domain; that stretch reads EEQTYFMQEA…ERLNHRVQVE (128 aa). Position 57 (His-57) interacts with Zn(2+). The active-site Proton donor is Glu-59. Residues Cys-87 and Cys-90 each contribute to the Zn(2+) site.

It belongs to the cytidine and deoxycytidylate deaminase family. As to quaternary structure, homodimer. Zn(2+) is required as a cofactor.

The enzyme catalyses adenosine(34) in tRNA + H2O + H(+) = inosine(34) in tRNA + NH4(+). Catalyzes the deamination of adenosine to inosine at the wobble position 34 of tRNA(Arg2). This Streptococcus pyogenes serotype M18 (strain MGAS8232) protein is tRNA-specific adenosine deaminase.